Reading from the N-terminus, the 407-residue chain is PWWP domain-containing protein 3 (407 aa).

The disordered stretch occupies residues 1-46 (MMVARTRSQKRKLEEINNQKKIKTKKKATGQQTSNTKNLRDVKKKG). Positions 63–129 (NGEYVLAKMS…SSNVLPLTVD (67 aa)) constitute a PWWP domain. 2 positions are modified to phosphoserine: Ser160 and Ser162. Positions 163–248 (DVEEDEFEPE…PIPSPKKTAK (86 aa)) are disordered. The span at 172 to 208 (ENTRKKLQKPIEKPKKEKIEATPKIDGGKRLKNEKSS) shows a compositional bias: basic and acidic residues. A phosphoserine mark is found at Ser236, Ser238, and Ser242.

Component of the mst2 complex composed of at least eaf6, mst2, nto1, pdp3, ptf1, ptf2 and tfg3.

The protein resides in the nucleus. Its function is as follows. Component of the mst2 complex which is a highly specific H3 lysine 14 (H3K14) acetyltransferase that functions together with gcn5 to regulate global levels of H3K14 acetylation (H3K14ac), critical for DNA damage checkpoint activation. This Schizosaccharomyces pombe (strain 972 / ATCC 24843) (Fission yeast) protein is PWWP domain-containing protein 3 (pdp3).